Here is a 620-residue protein sequence, read N- to C-terminus: mRNA cap guanine-N(7) methyltransferase (620 aa).

2 disordered regions span residues 1-176 and 193-304; these read MLPP…APSS and AHAN…DDEY. Positions 29–44 are enriched in polar residues; the sequence is RSPSMSLSPRSQNQSL. 2 stretches are compositionally biased toward low complexity: residues 45-60 and 136-157; these read PYPS…SAHP and PQPT…TPHH. The 276-residue stretch at 345–620 folds into the mRNA cap 0 methyltransferase domain; it reads SPIIGLKKFN…LYMGFAFEKM (276 aa). An mRNA-binding site is contributed by 354-355; sequence NN. Positions 358, 377, 399, 428, 454, and 459 each coordinate S-adenosyl-L-methionine.

It belongs to the class I-like SAM-binding methyltransferase superfamily. mRNA cap 0 methyltransferase family.

The protein resides in the nucleus. The enzyme catalyses a 5'-end (5'-triphosphoguanosine)-ribonucleoside in mRNA + S-adenosyl-L-methionine = a 5'-end (N(7)-methyl 5'-triphosphoguanosine)-ribonucleoside in mRNA + S-adenosyl-L-homocysteine. In terms of biological role, responsible for methylating the 5'-cap structure of mRNAs. The protein is mRNA cap guanine-N(7) methyltransferase (ABD1) of Cryptococcus neoformans var. neoformans serotype D (strain JEC21 / ATCC MYA-565) (Filobasidiella neoformans).